Consider the following 197-residue polypeptide: uncharacterized protein (197 aa).

This is an uncharacterized protein from Bacillus subtilis (strain 168).